A 585-amino-acid chain; its full sequence is Arginine--tRNA ligase (585 aa).

The 'HIGH' region signature appears at 131-141 (ANPTGPMHVGH).

This sequence belongs to the class-I aminoacyl-tRNA synthetase family. In terms of assembly, monomer.

It localises to the cytoplasm. It carries out the reaction tRNA(Arg) + L-arginine + ATP = L-arginyl-tRNA(Arg) + AMP + diphosphate. This is Arginine--tRNA ligase from Rhizobium leguminosarum bv. trifolii (strain WSM2304).